The following is a 329-amino-acid chain: Probable nicotianamine synthase 4 (329 aa).

Belongs to the nicotianamine synthase (NAS)-like family.

It catalyses the reaction 3 S-adenosyl-L-methionine = nicotianamine + 3 S-methyl-5'-thioadenosine + 3 H(+). Functionally, synthesizes nicotianamine, a polyamine that is the first intermediate in the synthesis of the phytosiderophores of the mugineic acid type found in gramineae which serves as a sensor for the physiological iron status within the plant, and/or might be involved in the transport of iron. In Hordeum vulgare (Barley), this protein is Probable nicotianamine synthase 4 (NAS4).